Reading from the N-terminus, the 285-residue chain is Ribosomal RNA small subunit methyltransferase A (285 aa).

N21, L23, G48, E69, D94, and N127 together coordinate S-adenosyl-L-methionine.

The protein belongs to the class I-like SAM-binding methyltransferase superfamily. rRNA adenine N(6)-methyltransferase family. RsmA subfamily.

It is found in the cytoplasm. The catalysed reaction is adenosine(1518)/adenosine(1519) in 16S rRNA + 4 S-adenosyl-L-methionine = N(6)-dimethyladenosine(1518)/N(6)-dimethyladenosine(1519) in 16S rRNA + 4 S-adenosyl-L-homocysteine + 4 H(+). Its function is as follows. Specifically dimethylates two adjacent adenosines (A1518 and A1519) in the loop of a conserved hairpin near the 3'-end of 16S rRNA in the 30S particle. May play a critical role in biogenesis of 30S subunits. The polypeptide is Ribosomal RNA small subunit methyltransferase A (Koribacter versatilis (strain Ellin345)).